Reading from the N-terminus, the 186-residue chain is Interferon beta (186 aa).

The N-terminal stretch at 1–21 (MTYRWILPMALLLCFSTTALS) is a signal peptide. Tyrosine 24 is subject to Phosphotyrosine. An intrachain disulfide couples cysteine 52 to cysteine 161. Asparagine 101 and asparagine 136 each carry an N-linked (GlcNAc...) asparagine glycan.

It belongs to the alpha/beta interferon family. As to quaternary structure, monomer.

It is found in the secreted. Type I interferon cytokine that plays a key role in the innate immune response to infection, developing tumors and other inflammatory stimuli. Signals via binding to high-affinity (IFNAR2) and low-affinity (IFNAR1) heterodimeric receptor, activating the canonical Jak-STAT signaling pathway resulting in transcriptional activation or repression of interferon-regulated genes that encode the effectors of the interferon response, such as antiviral proteins, regulators of cell proliferation and differentiation, and immunoregulatory proteins. Signals mostly via binding to a IFNAR1-IFNAR2 heterodimeric receptor, but can also function with IFNAR1 alone and independently of Jak-STAT pathways. Elicits a wide variety of responses, including antiviral and antibacterial activities, and can regulate the development of B-cells, myelopoiesis and lipopolysaccharide (LPS)-inducible production of tumor necrosis factor. Plays a role in neuronal homeostasis by regulating dopamine turnover and protecting dopaminergic neurons: acts by promoting neuronal autophagy and alpha-synuclein clearance, thereby preventing dopaminergic neuron loss. IFNB1 is more potent than interferon-alpha (IFN-alpha) in inducing the apoptotic and antiproliferative pathways required for control of tumor cell growth. This is Interferon beta (IFNB1) from Equus caballus (Horse).